The sequence spans 424 residues: Isovaleryl-CoA dehydrogenase, mitochondrial (424 aa).

Residues 1 to 30 (MATAVRLLGRRVSSWRLRPLPSPLAVPQRA) constitute a mitochondrion transit peptide. Lys-56, Lys-65, and Lys-76 each carry N6-acetyllysine; alternate. Residues Lys-56, Lys-65, and Lys-76 each carry the N6-succinyllysine; alternate modification. FAD contacts are provided by residues 163-172 (LAMSEPNAGS) and 196-198 (WIT). Ser-172 contributes to the substrate binding site. 220-221 (SR) contributes to the substrate binding site. Position 239 is an N6-acetyllysine (Lys-239). N6-acetyllysine; alternate is present on Lys-260. Lys-260 carries the N6-succinyllysine; alternate modification. Substrate-binding positions include Tyr-275 and 282-285 (DLER). The Proton acceptor role is filled by Glu-284. Arg-310 contributes to the FAD binding site. Lys-316 carries the post-translational modification N6-succinyllysine. Residues Gln-321 and 378 to 382 (QCLGG) contribute to the FAD site. 405–406 (GG) lines the substrate pocket. Position 407 to 409 (407 to 409 (TSE)) interacts with FAD.

Belongs to the acyl-CoA dehydrogenase family. In terms of assembly, homotetramer. FAD is required as a cofactor.

Its subcellular location is the mitochondrion matrix. It catalyses the reaction 3-methylbutanoyl-CoA + oxidized [electron-transfer flavoprotein] + H(+) = 3-methylbut-2-enoyl-CoA + reduced [electron-transfer flavoprotein]. The catalysed reaction is pentanoyl-CoA + oxidized [electron-transfer flavoprotein] + H(+) = (2E)-pentenoyl-CoA + reduced [electron-transfer flavoprotein]. The enzyme catalyses hexanoyl-CoA + oxidized [electron-transfer flavoprotein] + H(+) = (2E)-hexenoyl-CoA + reduced [electron-transfer flavoprotein]. It carries out the reaction butanoyl-CoA + oxidized [electron-transfer flavoprotein] + H(+) = (2E)-butenoyl-CoA + reduced [electron-transfer flavoprotein]. Its pathway is amino-acid degradation; L-leucine degradation; (S)-3-hydroxy-3-methylglutaryl-CoA from 3-isovaleryl-CoA: step 1/3. Its function is as follows. Catalyzes the conversion of isovaleryl-CoA/3-methylbutanoyl-CoA to 3-methylbut-2-enoyl-CoA as an intermediate step in the leucine (Leu) catabolic pathway. To a lesser extent, is also able to catalyze the oxidation of other saturated short-chain acyl-CoA thioesters as pentanoyl-CoA, hexenoyl-CoA and butenoyl-CoA. This chain is Isovaleryl-CoA dehydrogenase, mitochondrial (Ivd), found in Rattus norvegicus (Rat).